The chain runs to 186 residues: Ribosome-recycling factor (186 aa).

Belongs to the RRF family.

Its subcellular location is the cytoplasm. In terms of biological role, responsible for the release of ribosomes from messenger RNA at the termination of protein biosynthesis. May increase the efficiency of translation by recycling ribosomes from one round of translation to another. The protein is Ribosome-recycling factor of Chlorobium chlorochromatii (strain CaD3).